The primary structure comprises 139 residues: Inactive palmitoleoyl-protein carboxylesterase notum1b (139 aa).

It belongs to the pectinacetylesterase family. Notum subfamily.

Probable inactive palmitoleoyl-protein carboxylesterase. This chain is Inactive palmitoleoyl-protein carboxylesterase notum1b, found in Danio rerio (Zebrafish).